The chain runs to 189 residues: HTH-type transcriptional repressor AcnR (189 aa).

The region spanning alanine 10–methionine 70 is the HTH tetR-type domain. A DNA-binding region (H-T-H motif) is located at residues threonine 33–tyrosine 52. Citrate is bound by residues leucine 79–isoleucine 80, arginine 130, and glutamine 134. Position 181 (glutamate 181) interacts with Mg(2+). Citrate is bound at residue arginine 185.

In terms of assembly, homodimer.

Its function is as follows. AcnR negatively controls the expression of the aconitase gene acn. This Corynebacterium jeikeium (strain K411) protein is HTH-type transcriptional repressor AcnR.